The following is a 2114-amino-acid chain: Protein CELLULOSE SYNTHASE INTERACTIVE 2 (2114 aa).

42 ARM repeats span residues 2–42 (TSEM…LLGL), 46–87 (KKEC…VLCK), 89–128 (KNVR…EVSL), 135–177 (NVGT…NLCG), 180–219 (DGFW…RLIR), 222–262 (TSSI…AITS), 265–305 (EEAI…SYGT), 354–394 (GDTR…SLFG), 396–435 (VDLS…NLCK), 479–519 (EESR…NLCC), 522–561 (EEIR…KLIK), 563–595 (ADPS…HVLA), 601–640 (EFVT…DLFS), 643–682 (KDLC…SLSN), 708–750 (AKTN…RVLR), 774–816 (SDVF…LLAK), 825–865 (HNPF…RFCK), 870–910 (LLGR…CAAK), 914–953 (TLWA…IQRP), 994–1033 (PSNR…KWIA), 1044–1083 (PKVV…ALVR), 1087–1128 (DKTI…LVQN), 1141–1182 (ERVR…RIAD), 1185–1225 (DLSK…SLFR), 1227–1264 (PEIT…LCEL), 1265–1304 (FSSE…ALVK), 1312–1353 (RPDI…FLFT), 1355–1394 (EGLR…RLLD), 1396–1435 (KRFV…KMAK), 1454–1494 (ISQL…MVQP), 1496–1525 (LLIL…KPMV), 1526–1564 (LESL…SLLE), 1566–1605 (QRFQ…RSSV), 1606–1648 (TWPK…NILR), 1650–1689 (NPEH…ENQD), 1690–1730 (SSSV…RNPK), 1732–1771 (RETK…DISQ), 1772–1813 (HEGL…NFAM), 1816–1855 (RTSR…SLFS), 1857–1898 (HTLQ…TILT), 1901–1940 (PKLR…TLRQ), and 1949–1993 (TARS…CLPG). One can recognise a C2 domain in the interval 1974-2087 (SPAPSSFHER…LSEGSYSGIF (114 aa)).

As to quaternary structure, associates with cellulase synthase (CESA) complexes. Binds to cortical microtubules.

The protein resides in the cell membrane. Its subcellular location is the cytoplasm. It is found in the cytoskeleton. Functionally, regulator of the microtubular cytoskeleton. Microtubule-associated protein involved in the association of cellulase synthase (CESA) complexes (CSCs) and cortical microtubules. Promotes dynamics of CSCs in the plasma membrane. Regulates primary cell wall biosynthesis and cellulose microfibrils organization. The polypeptide is Protein CELLULOSE SYNTHASE INTERACTIVE 2 (Arabidopsis thaliana (Mouse-ear cress)).